Consider the following 370-residue polypeptide: Sphingosine 1-phosphate receptor 2 (370 aa).

Residues 1–57 (MTTCRLFAGFCQAVTMSKYSQYFNKTLIQVHYLTAKEMTAEELRDRIESKQSLSSLN) are Extracellular-facing. Residue Asn24 is glycosylated (N-linked (GlcNAc...) asparagine). The chain crosses the membrane as a helical span at residues 58–78 (ILFVVICSIIILENLLVLIAV). The Cytoplasmic portion of the chain corresponds to 79–87 (FRNKKFHSA). The helical transmembrane segment at 88 to 108 (MFFFIGNLAFSDLLAGSAYIA) threads the bilayer. Topologically, residues 109 to 128 (NIFLSGPRTFHLTPVQWFIR) are extracellular. The helical transmembrane segment at 129–149 (EGTAFIALSASVFSLLAIAIE) threads the bilayer. The Cytoplasmic segment spans residues 150-167 (RYIAITKVKVYGSNKTCR). Residues 168–193 (MFLLIGACWVMSILLGGLPIIGWNCI) traverse the membrane as a helical segment. The Extracellular segment spans residues 194-219 (NNLDDCSAVLPLNTRYYIRFVVTIFS). Residues 220–230 (IILLSIVILYV) traverse the membrane as a helical segment. Residues 231–254 (RIYLIVRTSHQEATNSPAYALLKT) lie on the Cytoplasmic side of the membrane. The chain crosses the membrane as a helical span at residues 255–275 (VTIVLGVFIICWLPAFTILLL). The Extracellular segment spans residues 276–289 (DTSCKMKQCPILNN). Residues 290–310 (AGIFFSFATLNSALNPLIYTL) traverse the membrane as a helical segment. The Cytoplasmic segment spans residues 311–370 (RSKDMRKEFLRVLCCWGLLNCGRPPHRCMVPLKSSSSMEHCTNKHEHQSIPIMQDCTTCV). A lipid anchor (S-palmitoyl cysteine) is attached at Cys325.

It belongs to the G-protein coupled receptor 1 family.

The protein localises to the cell membrane. In terms of biological role, receptor for the lysosphingolipid sphingosine 1-phosphate (S1P). S1P receptor is critical for cell migration and epithelial integrity during vertebrate embryogenesis. Receptor for the chemokine-like protein FAM19A5. Mediates the inhibitory effect of FAM19A5 on vascular smooth muscle cell proliferation and migration. The polypeptide is Sphingosine 1-phosphate receptor 2 (s1pr2) (Danio rerio (Zebrafish)).